The primary structure comprises 276 residues: MGIRSYRPYTPGTREASVSDFAEITKTEPEKSLTTYKHSRQGRNNRGVITSRHRGGGHKRLYRIVDFRRDKHNIPAKVAAIEYDPNRNARIALLFYKDGEKRYILAPAGITVGTMVVSGENAPFEVGNALPLARIPLGTDVHNIELTPGKGGQMVRAAGGSAQVVAKEGDYVTLRLPSKEVRMVRKECYATIGRVGNVEDRNIKLGKAGRTRHLGQRPHVRGSVMNPVDHPHGGGEGRAPIGRSGPVTPWGKPALGAKTRNKKKQSSKLIVRRRTR.

2 disordered regions span residues 29–55 (PEKS…RHRG) and 219–276 (HVRG…RRTR). Over residues 259 to 276 (TRNKKKQSSKLIVRRRTR) the composition is skewed to basic residues.

The protein belongs to the universal ribosomal protein uL2 family. As to quaternary structure, part of the 50S ribosomal subunit. Forms a bridge to the 30S subunit in the 70S ribosome.

One of the primary rRNA binding proteins. Required for association of the 30S and 50S subunits to form the 70S ribosome, for tRNA binding and peptide bond formation. It has been suggested to have peptidyltransferase activity; this is somewhat controversial. Makes several contacts with the 16S rRNA in the 70S ribosome. This chain is Large ribosomal subunit protein uL2, found in Rippkaea orientalis (strain PCC 8801 / RF-1) (Cyanothece sp. (strain PCC 8801)).